A 436-amino-acid polypeptide reads, in one-letter code: Gustatory receptor for sugar taste 61a (436 aa).

The Cytoplasmic segment spans residues 1 to 78 (MSRTSDDIRK…PQDVKFKVRS (78 aa)). Residues 79 to 99 (IGLAVTGLFLLLGGMKTLVGA) traverse the membrane as a helical segment. Over 100–111 (NILFTEGLNAKN) the chain is Extracellular. The helical transmembrane segment at 112–132 (IVGLVFLIVGMVNWLNFVGFA) threads the bilayer. Topologically, residues 133–164 (RSWSHIMLPWSSVDILMLFPPYKRGKRSLRSK) are cytoplasmic. A helical membrane pass occupies residues 165 to 185 (VNVLALSVVVLAVGDHMLYYA). Topologically, residues 186–214 (SGYCSYSMHILQCHTNHSRITFGLYLEKE) are extracellular. N-linked (GlcNAc...) asparagine glycosylation occurs at Asn201. Residues 215–235 (FSDIMFIMPFNIFSMCYGFWL) traverse the membrane as a helical segment. The Cytoplasmic portion of the chain corresponds to 236-237 (NG). The helical transmembrane segment at 238 to 258 (AFTFLWNFMDIFIVMTSIGLA) threads the bilayer. The Extracellular segment spans residues 259–304 (QRFQQFAARVGALEGRHVPEALWYDIRRDHIRLCELASLVEASMSN). Residues 305 to 325 (IVFVSCANNVYVICNQALAIF) traverse the membrane as a helical segment. Residues 326–334 (TKLRHPINY) lie on the Cytoplasmic side of the membrane. The chain crosses the membrane as a helical span at residues 335 to 355 (VYFWYSLIFLLARTSLVFMTA). Over 356–436 (SKIHDASLLP…AKSHKGLRCA (81 aa)) the chain is Extracellular.

The protein belongs to the insect chemoreceptor superfamily. Gustatory receptor (GR) family. Gr5a subfamily. As to expression, expressed in sweet sensing neurons of classical chemosensory sensilla, but also in two supersensitive neurons of atypical taste sensilla.

It is found in the cell membrane. One of the few identified sugar gustatory receptors identified so far with glucose being its primary ligand and which mediates acceptance behavior. The protein is Gustatory receptor for sugar taste 61a (Gr61a) of Drosophila melanogaster (Fruit fly).